We begin with the raw amino-acid sequence, 143 residues long: D-aminoacyl-tRNA deacylase (143 aa).

A Gly-cisPro motif, important for rejection of L-amino acids motif is present at residues 135-136 (GP).

This sequence belongs to the DTD family. In terms of assembly, homodimer.

The protein resides in the cytoplasm. The enzyme catalyses glycyl-tRNA(Ala) + H2O = tRNA(Ala) + glycine + H(+). It carries out the reaction a D-aminoacyl-tRNA + H2O = a tRNA + a D-alpha-amino acid + H(+). In terms of biological role, an aminoacyl-tRNA editing enzyme that deacylates mischarged D-aminoacyl-tRNAs. Also deacylates mischarged glycyl-tRNA(Ala), protecting cells against glycine mischarging by AlaRS. Acts via tRNA-based rather than protein-based catalysis; rejects L-amino acids rather than detecting D-amino acids in the active site. By recycling D-aminoacyl-tRNA to D-amino acids and free tRNA molecules, this enzyme counteracts the toxicity associated with the formation of D-aminoacyl-tRNA entities in vivo and helps enforce protein L-homochirality. This chain is D-aminoacyl-tRNA deacylase, found in Mycolicibacterium smegmatis (strain ATCC 700084 / mc(2)155) (Mycobacterium smegmatis).